Consider the following 335-residue polypeptide: Adenine deaminase (335 aa).

The Zn(2+) site is built by His-17, His-19, and His-197. Residue Glu-200 is the Proton donor of the active site. Residue Asp-278 participates in Zn(2+) binding. Residue Asp-279 coordinates substrate.

This sequence belongs to the metallo-dependent hydrolases superfamily. Adenosine and AMP deaminases family. Adenine deaminase type 2 subfamily. Zn(2+) is required as a cofactor.

The enzyme catalyses adenine + H2O + H(+) = hypoxanthine + NH4(+). Its function is as follows. Catalyzes the hydrolytic deamination of adenine to hypoxanthine. Plays an important role in the purine salvage pathway and in nitrogen catabolism. This is Adenine deaminase from Marinomonas sp. (strain MWYL1).